A 179-amino-acid polypeptide reads, in one-letter code: Large ribosomal subunit protein uL5 (179 aa).

It belongs to the universal ribosomal protein uL5 family. As to quaternary structure, part of the 50S ribosomal subunit; part of the 5S rRNA/L5/L18/L25 subcomplex. Contacts the 5S rRNA and the P site tRNA. Forms a bridge to the 30S subunit in the 70S ribosome.

This is one of the proteins that bind and probably mediate the attachment of the 5S RNA into the large ribosomal subunit, where it forms part of the central protuberance. In the 70S ribosome it contacts protein S13 of the 30S subunit (bridge B1b), connecting the 2 subunits; this bridge is implicated in subunit movement. Contacts the P site tRNA; the 5S rRNA and some of its associated proteins might help stabilize positioning of ribosome-bound tRNAs. The chain is Large ribosomal subunit protein uL5 from Bacillus pumilus (strain SAFR-032).